A 109-amino-acid chain; its full sequence is uncharacterized protein (109 aa).

A coiled-coil region spans residues 27-89 (KEEAHQFRDK…LKRIDELIAV (63 aa)).

This is an uncharacterized protein from Streptococcus pneumoniae.